Here is a 266-residue protein sequence, read N- to C-terminus: Small ribosomal subunit protein eS1 (266 aa).

Positions 235–266 (GGAGGAAKASGDDTGAKVERADGYEPPIQETV) are disordered. The segment covering 244 to 257 (SGDDTGAKVERADG) has biased composition (basic and acidic residues).

It belongs to the eukaryotic ribosomal protein eS1 family. In terms of assembly, component of the small ribosomal subunit. Mature ribosomes consist of a small (40S) and a large (60S) subunit. The 40S subunit contains about 33 different proteins and 1 molecule of RNA (18S). The 60S subunit contains about 49 different proteins and 3 molecules of RNA (28S, 5.8S and 5S).

The protein localises to the cytoplasm. Component of the small ribosomal subunit. The ribosome is a large ribonucleoprotein complex responsible for the synthesis of proteins in the cell. In Oryzias latipes (Japanese rice fish), this protein is Small ribosomal subunit protein eS1 (rps3a).